Consider the following 445-residue polypeptide: Phosphoglucosamine mutase 1 (445 aa).

Serine 102 functions as the Phosphoserine intermediate in the catalytic mechanism. Positions 102, 241, 243, and 245 each coordinate Mg(2+). Serine 102 is modified (phosphoserine).

The protein belongs to the phosphohexose mutase family. It depends on Mg(2+) as a cofactor. Activated by phosphorylation.

The enzyme catalyses alpha-D-glucosamine 1-phosphate = D-glucosamine 6-phosphate. Its function is as follows. Catalyzes the conversion of glucosamine-6-phosphate to glucosamine-1-phosphate. The polypeptide is Phosphoglucosamine mutase 1 (Shewanella sp. (strain MR-7)).